A 230-amino-acid polypeptide reads, in one-letter code: MHLLIPAAGSGKRMGSGHNKLLLNVLGQPLLSWTVQAALASQSIEWIGIMGQPYDFPAFEALLTPLHSPKPVQLIVGGDTRQQSVFNGIQALPPGAKFVLIHDGARCLATPDLFDRCTEALQHCQGLIAAMPVKDTIKIVNADGWITDTPDRQGLWGAQTPQGFDVALLKACHDKGKQEGWEVTDDAALLEKCGQPVKIVPGEDTNLKITTPVDLAIAEFILGQRSAKSA.

Belongs to the IspD/TarI cytidylyltransferase family. IspD subfamily.

The catalysed reaction is 2-C-methyl-D-erythritol 4-phosphate + CTP + H(+) = 4-CDP-2-C-methyl-D-erythritol + diphosphate. It functions in the pathway isoprenoid biosynthesis; isopentenyl diphosphate biosynthesis via DXP pathway; isopentenyl diphosphate from 1-deoxy-D-xylulose 5-phosphate: step 2/6. Its function is as follows. Catalyzes the formation of 4-diphosphocytidyl-2-C-methyl-D-erythritol from CTP and 2-C-methyl-D-erythritol 4-phosphate (MEP). This chain is 2-C-methyl-D-erythritol 4-phosphate cytidylyltransferase, found in Synechocystis sp. (strain ATCC 27184 / PCC 6803 / Kazusa).